The following is a 450-amino-acid chain: UDP-N-acetylmuramoylalanine--D-glutamate ligase (450 aa).

115 to 121 (GTNGKTT) is an ATP binding site.

This sequence belongs to the MurCDEF family.

Its subcellular location is the cytoplasm. It carries out the reaction UDP-N-acetyl-alpha-D-muramoyl-L-alanine + D-glutamate + ATP = UDP-N-acetyl-alpha-D-muramoyl-L-alanyl-D-glutamate + ADP + phosphate + H(+). It participates in cell wall biogenesis; peptidoglycan biosynthesis. Functionally, cell wall formation. Catalyzes the addition of glutamate to the nucleotide precursor UDP-N-acetylmuramoyl-L-alanine (UMA). The chain is UDP-N-acetylmuramoylalanine--D-glutamate ligase from Lachnospira eligens (strain ATCC 27750 / DSM 3376 / VPI C15-48 / C15-B4) (Eubacterium eligens).